A 718-amino-acid polypeptide reads, in one-letter code: Methionine--tRNA ligase (718 aa).

A 'HIGH' region motif is present at residues 27–37 (PYANGQIHIGH). Residues Cys-158, Cys-161, Cys-171, and Cys-174 each contribute to the Zn(2+) site. The short motif at 348–352 (KMSKS) is the 'KMSKS' region element. Lys-351 is a binding site for ATP. One can recognise a tRNA-binding domain in the interval 612–718 (DFAKIDLRIA…SGAKPGMRVK (107 aa)).

Belongs to the class-I aminoacyl-tRNA synthetase family. MetG type 1 subfamily. In terms of assembly, homodimer. Zn(2+) is required as a cofactor.

The protein localises to the cytoplasm. It catalyses the reaction tRNA(Met) + L-methionine + ATP = L-methionyl-tRNA(Met) + AMP + diphosphate. Is required not only for elongation of protein synthesis but also for the initiation of all mRNA translation through initiator tRNA(fMet) aminoacylation. This is Methionine--tRNA ligase from Burkholderia thailandensis (strain ATCC 700388 / DSM 13276 / CCUG 48851 / CIP 106301 / E264).